Reading from the N-terminus, the 453-residue chain is Tetrahydroanabasine acetyltransferase (453 aa).

Catalysis depends on proton acceptor residues His-163 and Asp-388.

It belongs to the plant acyltransferase family. As to quaternary structure, monomer.

It carries out the reaction tetrahydroanabasine + acetyl-CoA = ammodendrine + CoA. It functions in the pathway alkaloid biosynthesis. Tetrahydroanabasine acetyltransferase involved in the accumulation of quinolizidine type antinutritional alkaloids (QAs). QAs impart a bitter taste to plants, acting as repellents and toxicants for herbivores and predators, and possess a variety of pharmacological effects, including sedative, anticonvulsant, anti-inflammatory, antiviral, antitumor, antipyretic, anti-hepatitis B, antifibrotic, antiallergic, antidiarrheal, analgesic and antimicrobial activities. Mediates the conversion of tetrahydroanabasine into ammodendrine. This chain is Tetrahydroanabasine acetyltransferase, found in Lupinus angustifolius (Narrow-leaved blue lupine).